Reading from the N-terminus, the 417-residue chain is Serine hydroxymethyltransferase (417 aa).

(6S)-5,6,7,8-tetrahydrofolate-binding positions include leucine 121 and 125–127; that span reads GHL. Lysine 229 is subject to N6-(pyridoxal phosphate)lysine. Position 355 to 357 (355 to 357) interacts with (6S)-5,6,7,8-tetrahydrofolate; it reads SPF.

Belongs to the SHMT family. In terms of assembly, homodimer. The cofactor is pyridoxal 5'-phosphate.

Its subcellular location is the cytoplasm. It catalyses the reaction (6R)-5,10-methylene-5,6,7,8-tetrahydrofolate + glycine + H2O = (6S)-5,6,7,8-tetrahydrofolate + L-serine. Its pathway is one-carbon metabolism; tetrahydrofolate interconversion. The protein operates within amino-acid biosynthesis; glycine biosynthesis; glycine from L-serine: step 1/1. Catalyzes the reversible interconversion of serine and glycine with tetrahydrofolate (THF) serving as the one-carbon carrier. This reaction serves as the major source of one-carbon groups required for the biosynthesis of purines, thymidylate, methionine, and other important biomolecules. Also exhibits THF-independent aldolase activity toward beta-hydroxyamino acids, producing glycine and aldehydes, via a retro-aldol mechanism. The polypeptide is Serine hydroxymethyltransferase (Klebsiella pneumoniae (strain 342)).